The chain runs to 415 residues: Serine hydroxymethyltransferase (415 aa).

(6S)-5,6,7,8-tetrahydrofolate is bound by residues Leu-118 and 122–124 (GHL). At Lys-227 the chain carries N6-(pyridoxal phosphate)lysine.

This sequence belongs to the SHMT family. As to quaternary structure, homodimer. The cofactor is pyridoxal 5'-phosphate.

Its subcellular location is the cytoplasm. It carries out the reaction (6R)-5,10-methylene-5,6,7,8-tetrahydrofolate + glycine + H2O = (6S)-5,6,7,8-tetrahydrofolate + L-serine. The protein operates within one-carbon metabolism; tetrahydrofolate interconversion. It functions in the pathway amino-acid biosynthesis; glycine biosynthesis; glycine from L-serine: step 1/1. Its function is as follows. Catalyzes the reversible interconversion of serine and glycine with tetrahydrofolate (THF) serving as the one-carbon carrier. This reaction serves as the major source of one-carbon groups required for the biosynthesis of purines, thymidylate, methionine, and other important biomolecules. Also exhibits THF-independent aldolase activity toward beta-hydroxyamino acids, producing glycine and aldehydes, via a retro-aldol mechanism. In Elusimicrobium minutum (strain Pei191), this protein is Serine hydroxymethyltransferase.